The chain runs to 601 residues: Serine/threonine-protein phosphatase 2A 65 kDa regulatory subunit A beta isoform (601 aa).

Position 2 is an N-acetylalanine (Ala2). HEAT repeat units lie at residues 20–58, 59–96, 97–135, 136–173, 174–212, 213–251, 252–290, 291–333, 334–372, 373–411, 412–450, 451–489, 490–528, 529–567, and 568–601; these read DSLYPIAVLIDELRNEDVQLRLNSIKKLSTIALALGVER, TRSELLPFLTDTIYDEDEVLLALAEQLGNFTGLVGGPD, FAHCLLPPLENLATVEETVVRDKAVESLRQISQEHTPVA, LEAYFVPLVKRLASGDWFTSRTSACGLFSVCYPRASNA, VKAEIRQQFRSLCSDDTPMVRRAAASKLGEFAKVLELDS, VKSEIVPLFTSLASDEQDSVRLLAVEACVSIAQLLSQDD, LETLVMPTLRQAAEDKSWRVRYMVADRFSELQKAMGPKI, TLND…RETI, IMNQILPYIKELVSDTNQHVKSALASVIMGLSTILGKEN, TIEHLLPLFLAQLKDECPDVRLNIISNLDCVNEVIGIRQ, LSQSLLPAIVELAEDAKWRVRLAIIEYMPLLAGQLGVEF, FDEKLNSLCMAWLVDHVYAIREAATNNLMKLVQKFGTEW, AQNTIVPKVLVMANDPNYLHRMTTLFCINALSEACGQEI, TTKQMLPIVLKMAGDQVANVRFNVAKSLQKIGPILDTNA, and LQGEVKPVLQKLGQDEDMDVKYFAQEAISVLALA.

It belongs to the phosphatase 2A regulatory subunit A family. In terms of assembly, PP2A consists of a common heterodimeric core enzyme, composed of a 36 kDa catalytic subunit (subunit C) and a 65 kDa constant regulatory subunit (PR65 or subunit A), that associates with a variety of regulatory subunits. Proteins that associate with the core dimer include three families of regulatory subunits B (the R2/B/PR55/B55, R3/B''/PR72/PR130/PR59 and R5/B'/B56 families), the 48 kDa variable regulatory subunit, viral proteins, and cell signaling molecules. Interacts with IPO9. Interacts with SGO1. Interacts with RAF1.

Functionally, the PR65 subunit of protein phosphatase 2A serves as a scaffolding molecule to coordinate the assembly of the catalytic subunit and a variable regulatory B subunit. This is Serine/threonine-protein phosphatase 2A 65 kDa regulatory subunit A beta isoform (PPP2R1B) from Homo sapiens (Human).